Here is a 313-residue protein sequence, read N- to C-terminus: Porphobilinogen deaminase (313 aa).

Position 242 is an S-(dipyrrolylmethanemethyl)cysteine (C242).

It belongs to the HMBS family. In terms of assembly, monomer. It depends on dipyrromethane as a cofactor.

It catalyses the reaction 4 porphobilinogen + H2O = hydroxymethylbilane + 4 NH4(+). Its pathway is porphyrin-containing compound metabolism; protoporphyrin-IX biosynthesis; coproporphyrinogen-III from 5-aminolevulinate: step 2/4. Its function is as follows. Tetrapolymerization of the monopyrrole PBG into the hydroxymethylbilane pre-uroporphyrinogen in several discrete steps. This chain is Porphobilinogen deaminase, found in Escherichia coli O7:K1 (strain IAI39 / ExPEC).